Reading from the N-terminus, the 479-residue chain is Ribosomal RNA small subunit methyltransferase F (479 aa).

Residues 125 to 131 (AAAPGSK), Glu149, Asp176, and Asp194 contribute to the S-adenosyl-L-methionine site. Residue Cys247 is the Nucleophile of the active site.

Belongs to the class I-like SAM-binding methyltransferase superfamily. RsmB/NOP family.

Its subcellular location is the cytoplasm. It catalyses the reaction cytidine(1407) in 16S rRNA + S-adenosyl-L-methionine = 5-methylcytidine(1407) in 16S rRNA + S-adenosyl-L-homocysteine + H(+). Its function is as follows. Specifically methylates the cytosine at position 1407 (m5C1407) of 16S rRNA. The chain is Ribosomal RNA small subunit methyltransferase F from Salmonella paratyphi B (strain ATCC BAA-1250 / SPB7).